The following is an 83-amino-acid chain: RNA-binding protein Hfq (83 aa).

Residues 10 to 70 (DTFLNQVRKE…ISTVMPLRPI (61 aa)) enclose the Sm domain.

Belongs to the Hfq family. As to quaternary structure, homohexamer.

In terms of biological role, RNA chaperone that binds small regulatory RNA (sRNAs) and mRNAs to facilitate mRNA translational regulation in response to envelope stress, environmental stress and changes in metabolite concentrations. Also binds with high specificity to tRNAs. The sequence is that of RNA-binding protein Hfq from Desulfitobacterium hafniense (strain Y51).